The sequence spans 375 residues: Nucleosome assembly protein 1-like 4 (375 aa).

Positions 1 to 28 (MAENSLSDGGPADSVEAAKNASNTEKLT) are disordered. N-acetylalanine is present on A2. Phosphoserine is present on residues S5, S7, and S49. At T51 the chain carries Phosphothreonine. Residues S53 and S54 each carry the phosphoserine modification. T58 carries the phosphothreonine modification. K105 carries the N6-acetyllysine modification. S125 is modified (phosphoserine). K146 is modified (N6-acetyllysine). The Nuclear localization signal signature appears at 265–271 (IKKKQKH). S304 carries the phosphoserine modification. Residues 339–375 (AIEDDDNFEEGEEGEEEELEGDEEGEDEDDADVNPKV) are disordered.

It belongs to the nucleosome assembly protein (NAP) family. Interacts with core (H2A, H2B, H3, H4) and linker (H1) histones. In terms of processing, polyglutamylated and polyglycylated. These 2 modifications occur exclusively on glutamate residues and result in either polyglutamate or polyglycine chains on the gamma-carboxyl group. Both modifications can coexist on the same protein on adjacent residues, and lowering polyglycylation levels increases polyglutamylation, and reciprocally. Polyglutamylated by TTLL4. Post-translationally, phosphorylated at the G0/G1 boundary but it is not phosphorylated in S-phase. Phosphorylated protein remains in the cytoplasm in a complex with histones during the G0/G1 transition, whereas dephosphorylation triggers its transport into the nucleus at the G1/S-boundary.

Its subcellular location is the nucleus. The protein localises to the cytoplasm. Acts as a histone chaperone in nucleosome assembly. In condensing spermatids, mediates the loading of the heterodimer composed of histones H2AB1 and H2BC1/TH2B onto the nucleosomes, thereby promoting the replacement of histones to protamine in male germ cells. The polypeptide is Nucleosome assembly protein 1-like 4 (Nap1l4) (Mus musculus (Mouse)).